A 387-amino-acid polypeptide reads, in one-letter code: 3-ketoacyl-CoA thiolase (387 aa).

Cys91 acts as the Acyl-thioester intermediate in catalysis. Residues His343 and Cys373 each act as proton acceptor in the active site.

It belongs to the thiolase-like superfamily. Thiolase family. As to quaternary structure, heterotetramer of two alpha chains (FadB) and two beta chains (FadA).

Its subcellular location is the cytoplasm. The enzyme catalyses an acyl-CoA + acetyl-CoA = a 3-oxoacyl-CoA + CoA. The protein operates within lipid metabolism; fatty acid beta-oxidation. Catalyzes the final step of fatty acid oxidation in which acetyl-CoA is released and the CoA ester of a fatty acid two carbons shorter is formed. The protein is 3-ketoacyl-CoA thiolase of Shewanella sp. (strain MR-7).